Here is a 115-residue protein sequence, read N- to C-terminus: Holo-[acyl-carrier-protein] synthase (115 aa).

Mg(2+)-binding residues include Asp6 and Glu51.

It belongs to the P-Pant transferase superfamily. AcpS family. Mg(2+) serves as cofactor.

Its subcellular location is the cytoplasm. The catalysed reaction is apo-[ACP] + CoA = holo-[ACP] + adenosine 3',5'-bisphosphate + H(+). In terms of biological role, transfers the 4'-phosphopantetheine moiety from coenzyme A to a Ser of acyl-carrier-protein. This is Holo-[acyl-carrier-protein] synthase from Campylobacter jejuni subsp. jejuni serotype O:23/36 (strain 81-176).